Reading from the N-terminus, the 119-residue chain is Large ribosomal subunit protein bL20 (119 aa).

Belongs to the bacterial ribosomal protein bL20 family.

Binds directly to 23S ribosomal RNA and is necessary for the in vitro assembly process of the 50S ribosomal subunit. It is not involved in the protein synthesizing functions of that subunit. This is Large ribosomal subunit protein bL20 from Clostridium botulinum (strain Alaska E43 / Type E3).